The primary structure comprises 353 residues: UPF0283 membrane protein YcjF (353 aa).

Basic and acidic residues predominate over residues 1–19 (MSEPLKPRIDFAEPLKEEP). Residues 1–35 (MSEPLKPRIDFAEPLKEEPTSAFKAQQTFSEAESR) are disordered. The next 3 helical transmembrane spans lie at 70-90 (MVMGGLALFGASVVGQGVQWT), 100-120 (VALGGCAAGALIIGAGVGSVV), and 213-233 (ESTLMIAVSPLALVDMAFIAW).

It belongs to the UPF0283 family.

It localises to the cell inner membrane. The sequence is that of UPF0283 membrane protein YcjF from Salmonella dublin (strain CT_02021853).